Here is a 170-residue protein sequence, read N- to C-terminus: 3-hydroxydecanoyl-[acyl-carrier-protein] dehydratase (170 aa).

The active site involves H69.

Belongs to the thioester dehydratase family. FabA subfamily. In terms of assembly, homodimer.

The protein localises to the cytoplasm. It carries out the reaction a (3R)-hydroxyacyl-[ACP] = a (2E)-enoyl-[ACP] + H2O. It catalyses the reaction (3R)-hydroxydecanoyl-[ACP] = (2E)-decenoyl-[ACP] + H2O. The catalysed reaction is (2E)-decenoyl-[ACP] = (3Z)-decenoyl-[ACP]. The protein operates within lipid metabolism; fatty acid biosynthesis. Functionally, necessary for the introduction of cis unsaturation into fatty acids. Catalyzes the dehydration of (3R)-3-hydroxydecanoyl-ACP to E-(2)-decenoyl-ACP and then its isomerization to Z-(3)-decenoyl-ACP. Can catalyze the dehydratase reaction for beta-hydroxyacyl-ACPs with saturated chain lengths up to 16:0, being most active on intermediate chain length. In Idiomarina loihiensis (strain ATCC BAA-735 / DSM 15497 / L2-TR), this protein is 3-hydroxydecanoyl-[acyl-carrier-protein] dehydratase.